A 287-amino-acid polypeptide reads, in one-letter code: Anthocyanidin 3-O-glucosyltransferase 7 (287 aa).

UDP-alpha-D-glucose contacts are provided by Ala162, Gln164, His179, Trp182, Asn183, Ser184, and Glu187. An anthocyanidin is bound at residue Gly202. UDP-alpha-D-glucose contacts are provided by Asp203 and Gln204.

It belongs to the UDP-glycosyltransferase family. In terms of tissue distribution, expressed in cotyledons, hypocotyls, roots and leaves.

The enzyme catalyses an anthocyanidin + UDP-alpha-D-glucose + H(+) = an anthocyanidin 3-O-beta-D-glucoside + UDP. It functions in the pathway pigment biosynthesis; anthocyanin biosynthesis. In terms of biological role, in the presence of other necessary color factors, this glycosylation reaction allows the accumulation of anthocyanin pigments. The sequence is that of Anthocyanidin 3-O-glucosyltransferase 7 (GT7) from Manihot esculenta (Cassava).